The following is a 353-amino-acid chain: MTVILERRESTSLWGRFCNWITSTENRLYIGWFGVLMIPTLLTATSVFIIAFIAAPPVDIDGIREPVSGSLLYGNNIISGAIIPTSAAIGLHFYPIWEAASVDEWLYNGGPYELIVLHFLLGVACYMGREWELSFRLGMRPWIAVAYSAPVAAATAVFLIYPIGQGSFSDGMPLGISGTFNFMIVFQAEHNILMHPFHMLGVAGVFGGSLFSAMHGSLVTSSLIRETTENESANAGYRFGQEEETYNIVAAHGYFGRLIFQYASFNNSRSLHFFLAAWPVVGIWFTALGISTMAFNLNGFNFNQSVVDSQGRVINTWADIINRANLGMEVMHERNAHNFPLDLAAVEAPSING.

Threonine 2 bears the N-acetylthreonine mark. The residue at position 2 (threonine 2) is a Phosphothreonine. 3 helical membrane-spanning segments follow: residues 29–46, 118–133, and 142–156; these read YIGW…TATS, HFLL…EWEL, and WIAV…AATA. Histidine 118 is a binding site for chlorophyll a. Tyrosine 126 is a pheophytin a binding site. Positions 170 and 189 each coordinate [CaMn4O5] cluster. Residues 197-218 traverse the membrane as a helical segment; that stretch reads FHMLGVAGVFGGSLFSAMHGSL. Position 198 (histidine 198) interacts with chlorophyll a. Residues histidine 215 and 264–265 contribute to the a quinone site; that span reads SF. Histidine 215 is a Fe cation binding site. Histidine 272 lines the Fe cation pocket. The chain crosses the membrane as a helical span at residues 274–288; sequence FLAAWPVVGIWFTAL. Residues histidine 332, glutamate 333, aspartate 342, and alanine 344 each coordinate [CaMn4O5] cluster. A propeptide spanning residues 345 to 353 is cleaved from the precursor; sequence AVEAPSING.

This sequence belongs to the reaction center PufL/M/PsbA/D family. In terms of assembly, PSII is composed of 1 copy each of membrane proteins PsbA, PsbB, PsbC, PsbD, PsbE, PsbF, PsbH, PsbI, PsbJ, PsbK, PsbL, PsbM, PsbT, PsbX, PsbY, PsbZ, Psb30/Ycf12, at least 3 peripheral proteins of the oxygen-evolving complex and a large number of cofactors. It forms dimeric complexes. The D1/D2 heterodimer binds P680, chlorophylls that are the primary electron donor of PSII, and subsequent electron acceptors. It shares a non-heme iron and each subunit binds pheophytin, quinone, additional chlorophylls, carotenoids and lipids. D1 provides most of the ligands for the Mn4-Ca-O5 cluster of the oxygen-evolving complex (OEC). There is also a Cl(-1) ion associated with D1 and D2, which is required for oxygen evolution. The PSII complex binds additional chlorophylls, carotenoids and specific lipids. serves as cofactor. Tyr-161 forms a radical intermediate that is referred to as redox-active TyrZ, YZ or Y-Z. In terms of processing, C-terminally processed by CTPA; processing is essential to allow assembly of the oxygen-evolving complex and thus photosynthetic growth.

Its subcellular location is the plastid. It localises to the chloroplast thylakoid membrane. The catalysed reaction is 2 a plastoquinone + 4 hnu + 2 H2O = 2 a plastoquinol + O2. Functionally, photosystem II (PSII) is a light-driven water:plastoquinone oxidoreductase that uses light energy to abstract electrons from H(2)O, generating O(2) and a proton gradient subsequently used for ATP formation. It consists of a core antenna complex that captures photons, and an electron transfer chain that converts photonic excitation into a charge separation. The D1/D2 (PsbA/PsbD) reaction center heterodimer binds P680, the primary electron donor of PSII as well as several subsequent electron acceptors. This chain is Photosystem II protein D1, found in Illicium oligandrum (Star anise).